A 126-amino-acid polypeptide reads, in one-letter code: Fluoride-specific ion channel FluC (126 aa).

Transmembrane regions (helical) follow at residues 4-24 (PLLS…FLGL), 33-53 (IPLG…FAMA), 67-87 (FVIT…IEIV), and 97-117 (MAML…CLGL). Residues Gly-74 and Thr-77 each contribute to the Na(+) site.

Belongs to the fluoride channel Fluc/FEX (TC 1.A.43) family.

It is found in the cell inner membrane. The catalysed reaction is fluoride(in) = fluoride(out). Na(+) is not transported, but it plays an essential structural role and its presence is essential for fluoride channel function. Fluoride-specific ion channel. Important for reducing fluoride concentration in the cell, thus reducing its toxicity. This chain is Fluoride-specific ion channel FluC, found in Acinetobacter baumannii (strain ATCC 17978 / DSM 105126 / CIP 53.77 / LMG 1025 / NCDC KC755 / 5377).